We begin with the raw amino-acid sequence, 360 residues long: Peptide chain release factor 1 (360 aa).

Gln-235 carries the post-translational modification N5-methylglutamine. The tract at residues 285–313 (KRQQAEASTRRNLLGSGDRSDRNRTYNFP) is disordered.

The protein belongs to the prokaryotic/mitochondrial release factor family. Post-translationally, methylated by PrmC. Methylation increases the termination efficiency of RF1.

It is found in the cytoplasm. Its function is as follows. Peptide chain release factor 1 directs the termination of translation in response to the peptide chain termination codons UAG and UAA. The protein is Peptide chain release factor 1 of Klebsiella pneumoniae (strain 342).